A 100-amino-acid polypeptide reads, in one-letter code: Small ribosomal subunit protein uS14c (100 aa).

The protein belongs to the universal ribosomal protein uS14 family. As to quaternary structure, part of the 30S ribosomal subunit.

It is found in the plastid. It localises to the chloroplast. In terms of biological role, binds 16S rRNA, required for the assembly of 30S particles. In Chaetosphaeridium globosum (Charophycean green alga), this protein is Small ribosomal subunit protein uS14c.